We begin with the raw amino-acid sequence, 1395 residues long: Adventurous-gliding motility protein Z (1395 aa).

The Response regulatory domain occupies 4 to 122 (RVLIVESEHD…ELAALSHGIV (119 aa)). Residue D48 is modified to 4-aspartylphosphate. Disordered stretches follow at residues 137 to 172 (LNGTREAPPPMPPSLKAAAGGPPKLPKRERRSAMTE), 874 to 893 (AAESSAHIGDLTSERDGLRS), 919 to 947 (EQHAHQESRKAAASTQTTLEGQLAEARAH), 1212 to 1249 (AAESKAHEASTRLAAAQKERKDLEARHAKEQEDLAAKQ), 1287 to 1312 (RYKSKSATTATPAKAAAKPAAAEDDE), and 1326 to 1395 (AAAA…ELDK). Residues 213–911 (EGKIQILRDE…LEQTHGQLAA (699 aa)) are a coiled coil. Basic and acidic residues-rich tracts occupy residues 919–928 (EQHAHQESRK) and 1228–1249 (QKERKDLEARHAKEQEDLAAKQ). Composition is skewed to low complexity over residues 1291–1306 (KSATTATPAKAAAKPA) and 1326–1352 (AAAAQAPAPAKKPAAKPAAQAPAKKAP). Residues 1382–1395 (EDDDWTALVDELDK) are compositionally biased toward acidic residues.

Interacts with MglA.

Its subcellular location is the cytoplasm. Required for adventurous-gliding motility (A motility), in response to environmental signals sensed by the frz chemosensory system. Forms ordered clusters that span the cell length and that remain stationary relative to the surface across which the cells move, serving as anchor points (focal, transient adhesion sites) that allow the bacterium to move forward. Clusters disassemble at the lagging cell pole. This Myxococcus xanthus (strain DK1622) protein is Adventurous-gliding motility protein Z (aglZ).